The sequence spans 757 residues: Two pore calcium channel protein 1 (757 aa).

Topologically, residues 1–94 (MRERGEMREA…NDTRFERAMR (94 aa)) are cytoplasmic. The interval 24 to 48 (HSHGSGSSGTGSHTSGGGGGWRGSR) is disordered. A compositionally biased stretch (gly residues) spans 29–45 (GSSGTGSHTSGGGGGWR). A helical membrane pass occupies residues 95-115 (FYFVYLRLDWLWSLNLFALIL). The Extracellular portion of the chain corresponds to 116 to 152 (LNFLEKPLWCRGYSQHACDQRDLYFLGQLPYLSKTES). Residues 153–173 (LIYEGLTLVILVMDIFYPLSY) traverse the membrane as a helical segment. Over 174 to 188 (EGLNLFWKNTINKLK) the chain is Cytoplasmic. A helical transmembrane segment spans residues 189–209 (VLLLFILACDILVFAFSPQPF). Arginine 210 is a topological domain (extracellular). A helical; Voltage-sensor membrane pass occupies residues 211-228 (VAPYIRVAFLIMNIRELR). The Cytoplasmic portion of the chain corresponds to 229–233 (MCAVT). A helical transmembrane segment spans residues 234 to 254 (LVGMVGTYLNVLALSLLFLLF). Residues 255–270 (ASWLAYVTFEDTPQGK) are Extracellular-facing. Residues 271–285 (TVFSSYGTTLYQMFI) constitute an intramembrane region (pore-forming). The Extracellular portion of the chain corresponds to 286-308 (LFTTSNNPDVWVPAYKSSRWSSL). The chain crosses the membrane as a helical span at residues 309–329 (FFIVYVLLGVYFLTNLILAVI). Residues 330–453 (YDSFKEQLAK…LCEWLKSFVR (124 aa)) lie on the Cytoplasmic side of the membrane. EF-hand domains lie at 347 to 382 (TRKS…LNKY) and 388 to 423 (TSRE…IAIK). The chain crosses the membrane as a helical span at residues 454 to 474 (SPLFEYIVIFVLLMNLVAVII). Topologically, residues 475–493 (ETTLDIENSSSQKVWQEVE) are extracellular. N-linked (GlcNAc...) asparagine glycosylation is present at asparagine 482. The chain crosses the membrane as a helical span at residues 494 to 514 (FVFGWIYVIEMALKIFSLGFG). Topologically, residues 515-523 (AYWMEGQNK) are cytoplasmic. Residues 524–544 (FDFVLTWTIFIGETLTFAFPS) traverse the membrane as a helical segment. Over 545-553 (KLSFLSNGE) the chain is Extracellular. Residues 554 to 571 (WIRYLLLGRMLRLTRILL) traverse the membrane as a helical; Voltage-sensor segment. Residues 572-595 (QVRRFRAFVATFFTLMSSLMPYLG) lie on the Cytoplasmic side of the membrane. The helical transmembrane segment at 596-616 (IVFCTLCIYCSLGLQIFGGIV) threads the bilayer. Residues 617–640 (YAGNPTLEETDLFSNDYLLFNFND) lie on the Extracellular side of the membrane. The pore-forming intramembrane region spans 641-655 (YPSGMVTLFNLLVMG). The Extracellular portion of the chain corresponds to 656 to 676 (NWQAWMESYRQLTGSYWSLIY). The chain crosses the membrane as a helical span at residues 677-697 (FVSFYLISVLLLLNLIVAFVL). Topologically, residues 698–757 (EAFFAEMELEKDGEADIQDPTLEGRNRRRSVRVRTKGTMVDILLHHMLSNELDGSQNRDQ) are cytoplasmic.

It belongs to the calcium channel alpha-1 subunit (TC 1.A.1.11) family. Two pore calcium channel subfamily. In terms of assembly, homodimer. Expressed in shoot, mature leaf, cultured cells, and at lower level in roots.

The protein localises to the membrane. Inhibited by the VDCC blocker verapamil in yeast cells. Channel activity may be down-regulated by cytosolic Ca(2+) in rice cells. Inhibited by Al(3+). Functionally, may function as one of the major voltage-gated Ca(2+) channel (VDCC) across the plasma membrane. May be involved in the regulation of cytosolic Ca(2+) and in growth and development. Acts as the major ROS-responsive Ca(2+) channel and is the possible target of Al-dependent inhibition. Determines sensitivity to T.viride xylanase elicitor. Plays a regulatory role in elicitor-induced defense responses and hypersensitive cell death. The protein is Two pore calcium channel protein 1 (TPC1) of Oryza sativa subsp. japonica (Rice).